We begin with the raw amino-acid sequence, 191 residues long: Ribonuclease HII (191 aa).

The 185-residue stretch at 7–191 (ILMAGVDEVG…YSPVADLISK (185 aa)) folds into the RNase H type-2 domain. Asp13, Glu14, and Asp103 together coordinate a divalent metal cation.

The protein belongs to the RNase HII family. Requires Mn(2+) as cofactor. Mg(2+) is required as a cofactor.

It is found in the cytoplasm. It carries out the reaction Endonucleolytic cleavage to 5'-phosphomonoester.. In terms of biological role, endonuclease that specifically degrades the RNA of RNA-DNA hybrids. This chain is Ribonuclease HII, found in Legionella pneumophila subsp. pneumophila (strain Philadelphia 1 / ATCC 33152 / DSM 7513).